Reading from the N-terminus, the 525-residue chain is MTENIHKHRILILDFGSQYTQLVARRVRELGVYCELWAWDVTEAQIREFNPSGIILSGGPESTTEQDSPRAPDYVFQAGVPVLGVCYGMQTMAMQLGGKVQGSTQREFGYAQVEVLTDSLLVRDIQDDIGTGGAPLLDVWMSHGDKVTAIPADFVTVASTETCHFAIMANEEKRFYGVQFHPEVTHTRQGQRMLERFVLDICRCTPLWTPAKIIEDAVARIREQVGNDRVILGLSGGVDSSVTAMLLHRAIGERLTCVFVDNGLLRLNEASQVMEMFGDHYGLNIIAVPAEDRFLSALAGIDDPETKRKTIGRVFVEVFDEQALSLSDVKWLAQGTIYPDVIESAASATGKAHVIKSHHNVGGLPKEMKMGLVEPLKELFKDEVRKIGLELGLPYDMLYRHPFPGPGLGVRVLGEVKKEYCDLLRRADAIFIEELYKADLYNKVSQAFTVFLPVRSVGVMGDGRKYDWVVSLRAVETIDFMTAHWAHLPYDFLGRVSNRIINEIDGISRVVYDISGKPPATIEWE.

The Glutamine amidotransferase type-1 domain occupies arginine 9–leucine 207. The active-site Nucleophile is the cysteine 86. Residues histidine 181 and glutamate 183 contribute to the active site. Positions tryptophan 208–arginine 400 constitute a GMPS ATP-PPase domain. An ATP-binding site is contributed by serine 235–serine 241.

As to quaternary structure, homodimer.

It catalyses the reaction XMP + L-glutamine + ATP + H2O = GMP + L-glutamate + AMP + diphosphate + 2 H(+). Its pathway is purine metabolism; GMP biosynthesis; GMP from XMP (L-Gln route): step 1/1. In terms of biological role, catalyzes the synthesis of GMP from XMP. The chain is GMP synthase [glutamine-hydrolyzing] from Sodalis glossinidius (strain morsitans).